A 722-amino-acid chain; its full sequence is Polyribonucleotide nucleotidyltransferase (722 aa).

2 residues coordinate Mg(2+): D487 and D493. The region spanning P554–I613 is the KH domain. In terms of domain architecture, S1 motif spans G623–K691. The tract at residues K691–E722 is disordered. Over residues L701–D713 the composition is skewed to basic and acidic residues.

This sequence belongs to the polyribonucleotide nucleotidyltransferase family. Mg(2+) is required as a cofactor.

The protein localises to the cytoplasm. The catalysed reaction is RNA(n+1) + phosphate = RNA(n) + a ribonucleoside 5'-diphosphate. Its function is as follows. Involved in mRNA degradation. Catalyzes the phosphorolysis of single-stranded polyribonucleotides processively in the 3'- to 5'-direction. The chain is Polyribonucleotide nucleotidyltransferase from Rhodopseudomonas palustris (strain BisB5).